Reading from the N-terminus, the 213-residue chain is tRNA (guanine-N(7)-)-methyltransferase (213 aa).

Asp-44, Glu-69, Asn-96, and Asp-119 together coordinate S-adenosyl-L-methionine. The active site involves Asp-119. Lys-123 and Asp-155 together coordinate substrate.

Belongs to the class I-like SAM-binding methyltransferase superfamily. TrmB family.

It catalyses the reaction guanosine(46) in tRNA + S-adenosyl-L-methionine = N(7)-methylguanosine(46) in tRNA + S-adenosyl-L-homocysteine. It participates in tRNA modification; N(7)-methylguanine-tRNA biosynthesis. Its function is as follows. Catalyzes the formation of N(7)-methylguanine at position 46 (m7G46) in tRNA. The protein is tRNA (guanine-N(7)-)-methyltransferase of Thermosynechococcus vestitus (strain NIES-2133 / IAM M-273 / BP-1).